An 848-amino-acid chain; its full sequence is Translation initiation factor IF-2 (848 aa).

Over residues 1 to 10 (MSENNNDKIT) the composition is skewed to basic and acidic residues. 2 disordered regions span residues 1 to 79 (MSEN…EKPV) and 121 to 163 (AERQ…LFSS). A compositionally biased stretch (polar residues) spans 17 to 33 (LKRSGSETNTVKQNFNH). Over residues 121–138 (AERQAAEKQAKESEEGLH) the composition is skewed to basic and acidic residues. Residues 149–163 (KSSSNTTKPTPLFSS) show a composition bias toward polar residues. Positions 346–513 (TRPPIVTIMG…AILLQAEILD (168 aa)) constitute a tr-type G domain. The G1 stretch occupies residues 355 to 362 (GHVDHGKT). 355–362 (GHVDHGKT) is a GTP binding site. The G2 stretch occupies residues 380–384 (GITQH). A G3 region spans residues 401 to 404 (DTPG). Residues 401–405 (DTPGH) and 455–458 (NKID) contribute to the GTP site. Positions 455–458 (NKID) are G4. The segment at 491 to 493 (SAK) is G5.

The protein belongs to the TRAFAC class translation factor GTPase superfamily. Classic translation factor GTPase family. IF-2 subfamily.

The protein resides in the cytoplasm. Functionally, one of the essential components for the initiation of protein synthesis. Protects formylmethionyl-tRNA from spontaneous hydrolysis and promotes its binding to the 30S ribosomal subunits. Also involved in the hydrolysis of GTP during the formation of the 70S ribosomal complex. The sequence is that of Translation initiation factor IF-2 from Bartonella bacilliformis (strain ATCC 35685 / KC583 / Herrer 020/F12,63).